A 652-amino-acid chain; its full sequence is Protein high chlorophyll fluorescent 107 (652 aa).

2 disordered regions span residues 1–21 and 78–121; these read MHFF…NTSS and VFSP…EGKK. A chloroplast-targeting transit peptide spans 1-68; it reads MHFFFVPNSS…TFSSKNTYLY (68 aa). The segment covering 105–121 has biased composition (basic and acidic residues); the sequence is PLLENSDKESSEEEGKK. 12 TPR repeats span residues 168-201, 202-235, 237-270, 271-304, 305-338, 339-372, 374-406, 407-440, 441-474, 478-511, 543-576, and 598-631; these read LDLS…WPED, GRPY…TQGE, SYIW…DKKH, VAAW…CGRN, EYIY…NSRS, CASW…SPKN, FAWH…NPRD, PVLL…DPRH, QPVW…DANT, SRCL…NSQS, TEVV…GQNN, and QQPE…DPLK. A disordered region spans residues 585–610; the sequence is LRNMNRTKDSQSNQQPESSAGREDIE.

May form homomultimers. Part of a multi-subunit complex in the range of 60-190 and 600-800 kDa in chloroplast membranes.

It localises to the plastid. The protein resides in the chloroplast. It is found in the chloroplast membrane. The protein localises to the chloroplast stroma. Its function is as follows. Involved, directly or indirectly, in the processing of chloroplast encoded mRNAs. Exhibits sequence-specific RNA binding and RNA remodeling activities, probably leading to the activation of translation of the target gene cluster psbB-psbT-psbH-petB-petD. Blocks 5'-3' and 3'-5' exoribonucleases (e.g. polynucleotide phosphorylase (PNPase), RNase R) in vitro. Necessary for intercistronic RNA processing of the psbH 5' untranslated region or the stabilization of 5' processed psbH RNAs. Also required for the synthesis of psbB. The chain is Protein high chlorophyll fluorescent 107 from Arabidopsis thaliana (Mouse-ear cress).